An 86-amino-acid chain; its full sequence is Small ribosomal subunit protein bS20 (86 aa).

Residues 1–25 are disordered; sequence MANIKSQMKRIRTNEAARKRNQSVK.

This sequence belongs to the bacterial ribosomal protein bS20 family.

Its function is as follows. Binds directly to 16S ribosomal RNA. This chain is Small ribosomal subunit protein bS20, found in Nocardia farcinica (strain IFM 10152).